A 323-amino-acid chain; its full sequence is Acetyl-coenzyme A carboxylase carboxyl transferase subunit alpha (323 aa).

Residues 39 to 293 form the CoA carboxyltransferase C-terminal domain; sequence RLSKKSQQLT…RRALADSLRQ (255 aa).

Belongs to the AccA family. Acetyl-CoA carboxylase is a heterohexamer composed of biotin carboxyl carrier protein (AccB), biotin carboxylase (AccC) and two subunits each of ACCase subunit alpha (AccA) and ACCase subunit beta (AccD).

The protein resides in the cytoplasm. The catalysed reaction is N(6)-carboxybiotinyl-L-lysyl-[protein] + acetyl-CoA = N(6)-biotinyl-L-lysyl-[protein] + malonyl-CoA. It functions in the pathway lipid metabolism; malonyl-CoA biosynthesis; malonyl-CoA from acetyl-CoA: step 1/1. Its function is as follows. Component of the acetyl coenzyme A carboxylase (ACC) complex. First, biotin carboxylase catalyzes the carboxylation of biotin on its carrier protein (BCCP) and then the CO(2) group is transferred by the carboxyltransferase to acetyl-CoA to form malonyl-CoA. The sequence is that of Acetyl-coenzyme A carboxylase carboxyl transferase subunit alpha from Burkholderia orbicola (strain AU 1054).